The sequence spans 956 residues: DNA polymerase I (956 aa).

Residues 209–296 enclose the 5'-3' exonuclease domain; sequence VTVRQWVDYR…VTDLPLDIEF (88 aa).

Belongs to the DNA polymerase type-A family. In terms of assembly, single-chain monomer with multiple functions.

The enzyme catalyses DNA(n) + a 2'-deoxyribonucleoside 5'-triphosphate = DNA(n+1) + diphosphate. In terms of biological role, a DNA polymerase, required for DNA repair after DNA damage induced by ionizing radiation (IR); this is not the major DNA polymerase. Following severe irradiation (7 kGy of gamma irradiation) genomic DNA is fragmented. DNA is progressively degraded for the first 1.5 hours after IR, in a step promoted by RecA and counterbalanced by DNA Pol I and Pol III, followed by massive DNA synthesis and genome reassembly in the next hour. Optimal priming of DNA synthesis requires both RecA and RadA, Pol III initiates DNA synthesis while both Pol I and Pol III are required for its continuation. May also have 5'-3' exonuclease activity. In Deinococcus radiodurans (strain ATCC 13939 / DSM 20539 / JCM 16871 / CCUG 27074 / LMG 4051 / NBRC 15346 / NCIMB 9279 / VKM B-1422 / R1), this protein is DNA polymerase I (polA).